The following is a 491-amino-acid chain: Rab5 GDP/GTP exchange factor (491 aa).

The tract at residues 1-74 (MSLKSERRGI…EEEAFASSQS (74 aa)) is interaction with ubiquitinated proteins. The A20-type zinc-finger motif lies at 13-47 (DQSDLLCKKGCGYYGNPAWQGFCSKCWREEYHKAR). Cys-19, Cys-23, Cys-35, and Cys-38 together coordinate Zn(2+). The segment at 66-85 (EEAFASSQSSQGAQSLTFSK) is disordered. A compositionally biased stretch (low complexity) spans 69-84 (FASSQSSQGAQSLTFS). Phosphoserine occurs at positions 124 and 132. N6-acetyllysine is present on residues Lys-151 and Lys-170. The region spanning 232-375 (EKKDLAIQKR…IEKLDAQSLN (144 aa)) is the VPS9 domain. Phosphoserine occurs at positions 373, 377, 390, and 400. The interval 462 to 491 (PPNQPLAAIDSENVENDKLPPPLQPQVYAG) is disordered.

Interacts with RGS14; the interaction is GTP-dependent. Heterodimer with RABEP1. The heterodimer binds RAB4A and RAB5A that have been activated by GTP-binding. Interacts with RAB21, and with 100-fold lower affinity also with RAB22. Binds TSC2, GGA1, GGA2, GGA3, AP1G1 and AP1G2. Interacts with ubiquitinated EGFR. Post-translationally, monoubiquitinated.

Its subcellular location is the cytoplasm. It localises to the early endosome. The protein localises to the recycling endosome. Its function is as follows. Rab effector protein acting as linker between gamma-adaptin, RAB4A or RAB5A. Involved in endocytic membrane fusion and membrane trafficking of recycling endosomes. Stimulates nucleotide exchange on RAB5A. Can act as a ubiquitin ligase. The chain is Rab5 GDP/GTP exchange factor (RABGEF1) from Homo sapiens (Human).